The sequence spans 193 residues: Thymidine kinase (193 aa).

Residues 9 to 16 (SAMNAGKS) and 87 to 90 (DEAQ) each bind ATP. The active-site Proton acceptor is the Glu88. 4 residues coordinate Zn(2+): Cys145, Cys147, Cys182, and His185.

This sequence belongs to the thymidine kinase family. Homotetramer.

Its subcellular location is the cytoplasm. The enzyme catalyses thymidine + ATP = dTMP + ADP + H(+). This chain is Thymidine kinase, found in Idiomarina loihiensis (strain ATCC BAA-735 / DSM 15497 / L2-TR).